The primary structure comprises 248 residues: NADP-dependent 3-hydroxy acid dehydrogenase YdfG (248 aa).

NADP(+)-binding positions include 7 to 12 (GATAGF), 32 to 33 (RR), 54 to 55 (DV), and Asn-81. Ser-134 is a substrate binding site. NADP(+) is bound by residues Tyr-147, Lys-151, and 177–185 (PGLVGGTEF). The active-site Proton acceptor is Tyr-147.

The protein belongs to the short-chain dehydrogenases/reductases (SDR) family. In terms of assembly, homotetramer.

It carries out the reaction 3-hydroxypropanoate + NADP(+) = 3-oxopropanoate + NADPH + H(+). The catalysed reaction is L-allo-threonine + NADP(+) = aminoacetone + CO2 + NADPH. NADP-dependent dehydrogenase with broad substrate specificity acting on 3-hydroxy acids. Catalyzes the NADP-dependent oxidation of L-allo-threonine to L-2-amino-3-keto-butyrate, which is spontaneously decarboxylated into aminoacetone. Also acts on D-threonine, L-serine, D-serine, D-3-hydroxyisobutyrate, L-3-hydroxyisobutyrate, D-glycerate and L-glycerate. Able to catalyze the reduction of the malonic semialdehyde to 3-hydroxypropionic acid. YdfG is apparently supplementing RutE, the presumed malonic semialdehyde reductase involved in pyrimidine degradation since both are able to detoxify malonic semialdehyde. The chain is NADP-dependent 3-hydroxy acid dehydrogenase YdfG from Salmonella typhi.